A 483-amino-acid chain; its full sequence is Centrosomal protein cep57l1 (483 aa).

Residues 94 to 228 adopt a coiled-coil conformation; sequence EHKKVLESEK…AQVQTSLEVN (135 aa). Disordered regions lie at residues 237–261, 303–325, and 416–460; these read AQNSTQRKVKKKKQSKLKNSVSKEP, PQVSQKNPKTAEHKPSVLPGGSR, and KEQP…SKAS. Residues 243–252 are compositionally biased toward basic residues; the sequence is RKVKKKKQSK. Residues 375–418 are a coiled coil; the sequence is EDLERELDYVVKQMEIKSDQIMKLKRHQLNVNKLKKTAKLLKEQ. Positions 420–435 are enriched in polar residues; it reads RPTSVTKLAADKQNTG.

This sequence belongs to the translokin family. In terms of assembly, interacts with clip1, mis12, ndc80 and zwint. Interacts with gamma-tubulin.

It is found in the cytoplasm. The protein localises to the cytoskeleton. Its subcellular location is the microtubule organizing center. It localises to the centrosome. The protein resides in the chromosome. It is found in the centromere. The protein localises to the kinetochore. Its subcellular location is the spindle. In terms of biological role, required for spindle microtubule attachment to both kinetochores and centrosomes. Also functions to tether minus-ends of spindle microtubules to centrosomes. May act by forming ring-like structures around microtubules, or by serving as a cross-linker or scaffold at the attachment site. The sequence is that of Centrosomal protein cep57l1 (cep57l1) from Xenopus tropicalis (Western clawed frog).